The following is a 1000-amino-acid chain: Lysine-specific histone demethylase 1 (1000 aa).

Positions 104–123 (RRPAGRRGRPALNTSNSLER) are disordered. The stretch at 107–137 (AGRRGRPALNTSNSLERNGTRYVSAEAPISV) forms a coiled coil. Positions 153 to 249 (CYESAIASNL…YGCIYIISSL (97 aa)) constitute an SWIRM domain. FAD contacts are provided by residues 260–302 (VAII…IYEA), Glu301, and 328–329 (LA). Residues 279 to 950 (LFAQYEQDFL…RCESQPIPED (672 aa)) form a demethylase activity region. Positions 434-529 (IGWYISIEAF…ADMLNSLAST (96 aa)) form a coiled coil. Positions 780-800 (TYGTKRNAQQALGKEGERENK) are disordered. The segment at residues 841 to 921 (SRPSANPYLL…NYSTRLEEYQ (81 aa)) is a DNA-binding region (HMG box). 908-909 (AR) contributes to the FAD binding site. The segment covering 959-972 (EQEDEHLHPEKEGM) has biased composition (basic and acidic residues). Positions 959–1000 (EQEDEHLHPEKEGMSVENSDDDYHDDLDYEDSISEVFPDNFS) are disordered. A compositionally biased stretch (acidic residues) spans 976–991 (NSDDDYHDDLDYEDSI).

This sequence belongs to the flavin monoamine oxidase family. Component of the SWM histone demethylase complex composed of at least lsd1, lsd2, phf1 and phf2. Interacts directly with lsd2. Requires FAD as cofactor.

The protein localises to the nucleus. Functionally, catalytic component of the SWM histone demethylase complex that specifically demethylates H3K9me2, a specific tag for epigenetic transcriptional activation, thereby acting as a corepressor. Acts by oxidizing the substrate by FAD to generate the corresponding imine that is subsequently hydrolyzed. Has a role in regulating heterochromatin propagation and euchromatic transcription. Also has a gene activating role. This chain is Lysine-specific histone demethylase 1 (lsd1), found in Schizosaccharomyces pombe (strain 972 / ATCC 24843) (Fission yeast).